The sequence spans 279 residues: tRNA pseudouridine synthase B (279 aa).

Catalysis depends on aspartate 38, which acts as the Nucleophile.

The protein belongs to the pseudouridine synthase TruB family. Type 1 subfamily.

It catalyses the reaction uridine(55) in tRNA = pseudouridine(55) in tRNA. Responsible for synthesis of pseudouridine from uracil-55 in the psi GC loop of transfer RNAs. The chain is tRNA pseudouridine synthase B from Acholeplasma laidlawii (strain PG-8A).